We begin with the raw amino-acid sequence, 60 residues long: Protein translocase subunit SecE (60 aa).

Over 1–31 the chain is Cytoplasmic; that stretch reads MFARLIRYFQEARAELARVTWPTREQVVEGT. Residues 32–52 form a helical membrane-spanning segment; the sequence is QAILLFTLAFMVILGLYDTVF. Topologically, residues 53-60 are extracellular; that stretch reads RFLIGLLR.

Belongs to the SecE/SEC61-gamma family. Component of the Sec protein translocase complex. Heterotrimer consisting of SecY, SecE and SecG subunits. The heterotrimers can form oligomers, although 1 heterotrimer is thought to be able to translocate proteins. Interacts with SecDF, and other proteins may be involved. The channel interacts with SecA via subunit SecY.

It localises to the cell inner membrane. Functionally, essential subunit of the protein translocation channel SecYEG. Clamps together the 2 halves of SecY. May contact the channel plug during translocation. The sequence is that of Protein translocase subunit SecE from Thermus thermophilus (strain ATCC 27634 / DSM 579 / HB8).